The chain runs to 37 residues: Large ribosomal subunit protein bL36 (37 aa).

Belongs to the bacterial ribosomal protein bL36 family.

The polypeptide is Large ribosomal subunit protein bL36 (Trichlorobacter lovleyi (strain ATCC BAA-1151 / DSM 17278 / SZ) (Geobacter lovleyi)).